The following is a 664-amino-acid chain: RBBP8 N-terminal-like protein (664 aa).

The span at 125 to 140 (LRGLGDRPKPRAKEGT) shows a compositional bias: basic and acidic residues. Disordered regions lie at residues 125–284 (LRGL…KLSP) and 369–664 (RAGS…WEET). The segment covering 241-255 (GTPPPLPARSSPPSP) has biased composition (pro residues). The span at 437 to 454 (ALDKPLDLSEWGRARGQD) shows a compositional bias: basic and acidic residues. The span at 481–496 (SGPLTRSPQALSNGTK) shows a compositional bias: polar residues. Residues 516–528 (LPGSQLSLSSPGS) show a composition bias toward low complexity. Residues 537 to 552 (PLPPPHPQPPPHPQPP) show a composition bias toward pro residues. The segment covering 554–570 (LDGHPEPSKAEVLRPES) has biased composition (basic and acidic residues). Residues 584-597 (GLSSQAEATTSTTG) are compositionally biased toward polar residues. The span at 628-637 (KKPSRGRRKL) shows a compositional bias: basic residues. Over residues 654-664 (PSPNSSPWEET) the composition is skewed to polar residues.

The polypeptide is RBBP8 N-terminal-like protein (RBBP8NL) (Homo sapiens (Human)).